We begin with the raw amino-acid sequence, 434 residues long: Alpha-enolase (434 aa).

S40 contributes to the Mg(2+) binding site. Substrate contacts are provided by H158 and E167. The active-site Proton donor is the E210. Mg(2+)-binding residues include D245, E293, and D318. Substrate is bound by residues E293 and D318. Residue K343 is the Proton acceptor of the active site. Substrate is bound by residues 370-373 (SHRS) and K394.

This sequence belongs to the enolase family. In terms of assembly, homodimer. Mg(2+) is required as a cofactor.

Its subcellular location is the cytoplasm. The catalysed reaction is (2R)-2-phosphoglycerate = phosphoenolpyruvate + H2O. It participates in carbohydrate degradation; glycolysis; pyruvate from D-glyceraldehyde 3-phosphate: step 4/5. In terms of biological role, both an enzyme and a lens structural protein. The polypeptide is Alpha-enolase (ENO1) (Anas platyrhynchos (Mallard)).